We begin with the raw amino-acid sequence, 266 residues long: Single-stranded DNA-binding protein WHY1, chloroplastic (266 aa).

The N-terminal 37 residues, 1–37, are a transit peptide targeting the chloroplast; the sequence is MPPPAPLFLSLASTPPPALMPVHHPRAPQSLTLVPPV. The interval 53-81 is disordered; it reads SPRHSDYFDPRAPPPPRGDGGYGRPPNGA. Residues 94–99 are required for ssDNA binding; it reads KGKAAL. The short motif at 172 to 185 is the Nuclear localization signal element; the sequence is KGRSEEGKVRKVLK.

This sequence belongs to the Whirly family. As to quaternary structure, homotetramer.

The protein resides in the plastid. It is found in the chloroplast stroma. It localises to the nucleus. Functionally, single-stranded DNA and RNA binding protein that maintains plastid genome stability by preventing break-induced and short homology-dependent illegitimate recombinations. Functions in RNA metabolism and is involved in the maturation of the atpF and 23S ribosomal RNAs. The polypeptide is Single-stranded DNA-binding protein WHY1, chloroplastic (WHY1) (Zea mays (Maize)).